Reading from the N-terminus, the 89-residue chain is Small ribosomal subunit protein uS15 (89 aa).

The protein belongs to the universal ribosomal protein uS15 family. As to quaternary structure, part of the 30S ribosomal subunit. Forms a bridge to the 50S subunit in the 70S ribosome, contacting the 23S rRNA.

Its function is as follows. One of the primary rRNA binding proteins, it binds directly to 16S rRNA where it helps nucleate assembly of the platform of the 30S subunit by binding and bridging several RNA helices of the 16S rRNA. In terms of biological role, forms an intersubunit bridge (bridge B4) with the 23S rRNA of the 50S subunit in the ribosome. This is Small ribosomal subunit protein uS15 from Serratia proteamaculans (strain 568).